An 849-amino-acid chain; its full sequence is Villin-1 (849 aa).

5 Gelsolin-like repeats span residues 30–107 (IEKS…DKFL), 147–213 (RVTE…EDGK), 262–335 (VPVE…TVEF), 405–475 (QEQL…PEMF), and 527–566 (AIQVDLAASSLNSSHCYILQAGGSFFTWLGSLSSPSDHNL). A disordered region spans residues 739–849 (ETPERSLRKS…AVATGTPRRL (111 aa)). Low complexity-rich tracts occupy residues 747–782 (KSSSSSLPRRSPGTSSSEPTTPEQRAAARTFASAST) and 791–823 (PAALSPSLSTPSPSPRSRSSASSSPASWNSTPS).

The protein belongs to the villin/gelsolin family.

The protein localises to the cytoplasm. The protein resides in the cytoskeleton. In terms of biological role, ca(2+)-independent actin-binding protein. Binds actin microfilaments (MFs). Involved in actin filament bundling, severing and capping. Caps the barbed end of actin filaments and protects them from disassembly. Promotes VLN3-mediated MF severing. The polypeptide is Villin-1 (Oryza sativa subsp. indica (Rice)).